We begin with the raw amino-acid sequence, 81 residues long: Omega-conotoxin-like TxMKLT1-0223 (81 aa).

The N-terminal stretch at 1–22 (MKLTCMMIVAVLFLTAWTFVTA) is a signal peptide. Residues 23–52 (VPHSSNALENLYLKARHEMENPEASKLNTR) constitute a propeptide that is removed on maturation. Intrachain disulfides connect Cys-55–Cys-72, Cys-62–Cys-76, and Cys-71–Cys-80.

Belongs to the conotoxin O1 superfamily. As to expression, expressed by the venom duct.

The protein resides in the secreted. In terms of biological role, omega-conotoxins act at presynaptic membranes, they bind and block voltage-gated calcium channels (Cav). The protein is Omega-conotoxin-like TxMKLT1-0223 of Conus textile (Cloth-of-gold cone).